Here is a 319-residue protein sequence, read N- to C-terminus: Triacylglycerol lipase (319 aa).

The 279-residue stretch at 10–288 (PVILVHGLAG…TSYHWNHLDE (279 aa)) folds into the AB hydrolase-1 domain. Leu-17 serves as a coordination point for substrate. Ser-87 (nucleophile) is an active-site residue. Gln-88 serves as a coordination point for substrate. A disulfide bridge connects residues Cys-190 and Cys-269. Asp-241 contacts Ca(2+). Active-site charge relay system residues include Asp-263 and His-285. Ca(2+) contacts are provided by Asp-287, Gln-291, and Val-295.

Belongs to the AB hydrolase superfamily. Pseudomonas lipase family. In terms of assembly, monomer. Interacts with lipase-specific foldase Lif. It depends on Ca(2+) as a cofactor.

It localises to the secreted. It carries out the reaction a triacylglycerol + H2O = a diacylglycerol + a fatty acid + H(+). Functionally, catalyzes the hydrolysis of triacylglycerol. The protein is Triacylglycerol lipase of Pseudarthrobacter phenanthrenivorans (Arthrobacter phenanthrenivorans).